A 115-amino-acid chain; its full sequence is U3-lycotoxin-Ls1p (115 aa).

Residues M1–A20 form the signal peptide. Positions E21 to R44 are excised as a propeptide. Intrachain disulfides connect C48–C63, C55–C72, C62–C87, and C74–C85.

It belongs to the neurotoxin 19 (CSTX) family. 01 subfamily. In terms of tissue distribution, expressed by the venom gland.

It localises to the secreted. This Lycosa singoriensis (Wolf spider) protein is U3-lycotoxin-Ls1p.